A 420-amino-acid chain; its full sequence is D-tagatose-1,6-bisphosphate aldolase subunit GatZ (420 aa).

It belongs to the GatZ/KbaZ family. GatZ subfamily. In terms of assembly, forms a complex with GatY.

The protein operates within carbohydrate metabolism; D-tagatose 6-phosphate degradation; D-glyceraldehyde 3-phosphate and glycerone phosphate from D-tagatose 6-phosphate: step 2/2. Functionally, component of the tagatose-1,6-bisphosphate aldolase GatYZ that is required for full activity and stability of the Y subunit. Could have a chaperone-like function for the proper and stable folding of GatY. When expressed alone, GatZ does not show any aldolase activity. Is involved in the catabolism of galactitol. This Escherichia coli O139:H28 (strain E24377A / ETEC) protein is D-tagatose-1,6-bisphosphate aldolase subunit GatZ.